A 355-amino-acid polypeptide reads, in one-letter code: MEEVAVKKRGRPSKASVGGKSSTAAVAAISPGIKKRGRPAKNKGSSGGGGQRGRPPKASKIQNDEDPEDEGEEDGDGDGSGAELANNSSPSPTKGRGRPKSSGGAGSGSGDSVKTPGSAKKRKAGRPKKHQPSDSENEDDQDEDDDGNSSIEERRPVGRPSAGSVNLNISRTGRGLGRPKKRAVESNGDGEPQVPKKRGRPPQNKSGSGGSTGYVPTGRPRGRPKANAAPVEKHEDNDDDQDDENSGEEEHSSPEKTVVAPKKRGRPSLAAGKVSKEETTKPRSRPAKNIDDDADDADSADQGQHNSKKESNDEDRAVDGTPTKGDGLKWNSDGENDANDGYVSDNYNDSESVAA.

Position 1 is an N-acetylmethionine (methionine 1). The disordered stretch occupies residues 1–355; it reads MEEVAVKKRG…NYNDSESVAA (355 aa). A DNA-binding region (a.T hook 1) is located at residues 7-14; sequence KKRGRPSK. Residue serine 30 is modified to Phosphoserine. 2 DNA-binding regions (a.T hook) span residues 34-41 and 60-67; these read KKRGRPAK and KIQNDEDP. A compositionally biased stretch (acidic residues) spans 64-77; that stretch reads DEDPEDEGEEDGDG. Serine 80, serine 88, and serine 89 each carry phosphoserine. Positions 94-101 form a DNA-binding region, a.T hook 4; sequence KGRGRPKS. Residues serine 107, serine 109, and serine 112 each carry the phosphoserine modification. Threonine 115 bears the Phosphothreonine mark. Serine 118 carries the phosphoserine modification. A compositionally biased stretch (basic residues) spans 119 to 130; that stretch reads AKKRKAGRPKKH. Positions 122-129 form a DNA-binding region, a.T hook 5; the sequence is RKAGRPKK. Serine 133 and serine 135 each carry phosphoserine; by CK2. Positions 135 to 147 are enriched in acidic residues; the sequence is SENEDDQDEDDDG. A phosphoserine mark is found at serine 149, serine 150, serine 161, serine 164, and serine 170. A DNA-binding region (a.T hook 6) is located at residues 155 to 162; it reads RPVGRPSA. Positions 174–181 form a DNA-binding region, a.T hook 7; sequence RGLGRPKK. Serine 186 carries the phosphoserine; by CK2 modification. The segment at residues 196 to 203 is a DNA-binding region (a.T hook 8); it reads KKRGRPPQ. A Phosphoserine modification is found at serine 208. The segment at residues 219–226 is a DNA-binding region (a.T hook 9); sequence RPRGRPKA. Residues 237–247 show a composition bias toward acidic residues; the sequence is NDDDQDDENSG. 3 positions are modified to phosphoserine: serine 246, serine 252, and serine 253. DNA-binding regions (a.T hook) lie at residues 262 to 269 and 281 to 288; these read KKRGRPSL and KPRSRPAK. Residues serine 299 and serine 307 each carry the phosphoserine modification. Over residues 307 to 318 the composition is skewed to basic and acidic residues; the sequence is SKKESNDEDRAV. A Phosphoserine; by CK2 modification is found at serine 311. A Phosphothreonine modification is found at threonine 321. Position 332 is a phosphoserine; by CK2 (serine 332). Residues 345-355 are compositionally biased toward polar residues; sequence DNYNDSESVAA.

It is found in the nucleus. It localises to the chromosome. Its function is as follows. This satellite DNA-associated protein is a double-stranded DNA binding protein specific for tracts of pure at DNA. It may play a role in organizing the higher-order structure of euchromatin as well as heterochromatin. The sequence is that of Chromosomal protein D1 (D1) from Drosophila melanogaster (Fruit fly).